Here is a 1142-residue protein sequence, read N- to C-terminus: Error-prone DNA polymerase (1142 aa).

The segment at 291-361 (TSSPAQAARE…GTGAAAGTDR (71 aa)) is disordered. Low complexity-rich tracts occupy residues 311-320 (LRASLPAERP) and 327-344 (GPAA…PGEP). The segment covering 345-355 (GLAGAGGGTGA) has biased composition (gly residues).

This sequence belongs to the DNA polymerase type-C family. DnaE2 subfamily.

The protein localises to the cytoplasm. The catalysed reaction is DNA(n) + a 2'-deoxyribonucleoside 5'-triphosphate = DNA(n+1) + diphosphate. DNA polymerase involved in damage-induced mutagenesis and translesion synthesis (TLS). It is not the major replicative DNA polymerase. The polypeptide is Error-prone DNA polymerase (Anaeromyxobacter dehalogenans (strain 2CP-1 / ATCC BAA-258)).